Consider the following 364-residue polypeptide: DNA replication and repair protein RecF (364 aa).

ATP is bound at residue 30–37; sequence GANGSGKT.

It belongs to the RecF family.

It is found in the cytoplasm. The RecF protein is involved in DNA metabolism; it is required for DNA replication and normal SOS inducibility. RecF binds preferentially to single-stranded, linear DNA. It also seems to bind ATP. This chain is DNA replication and repair protein RecF, found in Sodalis glossinidius (strain morsitans).